The following is a 325-amino-acid chain: Probable 4-hydroxy-tetrahydrodipicolinate reductase 2, chloroplastic (325 aa).

Residues 1–32 (MLSLRPPCTLSPAPWRRRRTLHGAAGTPQRVS) constitute a chloroplast transit peptide. NAD(+) is bound by residues 57–62 (GCTGKM), 149–151 (GTT), and 172–175 (SPQM). His-208 functions as the Proton donor/acceptor in the catalytic mechanism. Residue Lys-212 is the Proton donor of the active site. (S)-2,3,4,5-tetrahydrodipicolinate is bound at residue 217–218 (GT).

Belongs to the DapB family.

It is found in the plastid. Its subcellular location is the chloroplast. It catalyses the reaction (S)-2,3,4,5-tetrahydrodipicolinate + NAD(+) + H2O = (2S,4S)-4-hydroxy-2,3,4,5-tetrahydrodipicolinate + NADH + H(+). The enzyme catalyses (S)-2,3,4,5-tetrahydrodipicolinate + NADP(+) + H2O = (2S,4S)-4-hydroxy-2,3,4,5-tetrahydrodipicolinate + NADPH + H(+). It functions in the pathway amino-acid biosynthesis; L-lysine biosynthesis via DAP pathway; (S)-tetrahydrodipicolinate from L-aspartate: step 4/4. In terms of biological role, catalyzes the conversion of 4-hydroxy-tetrahydrodipicolinate (HTPA) to tetrahydrodipicolinate. The polypeptide is Probable 4-hydroxy-tetrahydrodipicolinate reductase 2, chloroplastic (DAPB2) (Oryza sativa subsp. japonica (Rice)).